Here is a 184-residue protein sequence, read N- to C-terminus: Large ribosomal subunit protein uL6 (184 aa).

The protein belongs to the universal ribosomal protein uL6 family. In terms of assembly, part of the 50S ribosomal subunit.

Functionally, this protein binds to the 23S rRNA, and is important in its secondary structure. It is located near the subunit interface in the base of the L7/L12 stalk, and near the tRNA binding site of the peptidyltransferase center. This is Large ribosomal subunit protein uL6 from Thermomicrobium roseum (strain ATCC 27502 / DSM 5159 / P-2).